We begin with the raw amino-acid sequence, 439 residues long: AT-hook motif nuclear-localized protein 13 (439 aa).

Disordered regions lie at residues 1–46 (MDSR…NSYN), 69–216 (QRLP…LGGT), and 342–439 (GRKQ…NSPQ). Low complexity-rich tracts occupy residues 9–31 (QQQQQQQQQQQQQQQQQHLQQQQ) and 79–95 (PHQPQQHQYHHPQPQQQ). The span at 109–120 (SPSSVAATQQHS) shows a compositional bias: polar residues. Residues 130-139 (VKKKRGRPRK) are compositionally biased toward basic residues. Residues 131–139 (KKKRGRPRK) carry the Bipartite nuclear localization signal motif. Positions 131-143 (KKKRGRPRKYAAD) form a DNA-binding region, a.T hook 1. Composition is skewed to gly residues over residues 143-152 (DGGGGGGGGS) and 171-183 (YGGGNEGGGGGDS). The segment at residues 196–208 (KRNRGRPPGSGKK) is a DNA-binding region (a.T hook 2). Residues 217–359 (GGVGFTPHVI…GRAQNTPEPA (143 aa)) form the PPC domain. Residues 347–357 (QSAGRAQNTPE) show a composition bias toward polar residues. Composition is skewed to low complexity over residues 376-386 (SPRSQGQQHSS) and 403-416 (NNNNSNNHGIFGNS). Positions 428–439 (MYQNLWPGNSPQ) are enriched in polar residues.

It is found in the nucleus. Transcription factor that specifically binds AT-rich DNA sequences related to the nuclear matrix attachment regions (MARs). The chain is AT-hook motif nuclear-localized protein 13 from Arabidopsis thaliana (Mouse-ear cress).